Consider the following 382-residue polypeptide: Flap endonuclease 1 (382 aa).

Residues Met-1–Arg-104 form an N-domain region. Asp-34 lines the Mg(2+) pocket. Arg-47 and Arg-70 together coordinate DNA. Mg(2+)-binding residues include Asp-86, Glu-158, Glu-160, Asp-179, and Asp-181. The I-domain stretch occupies residues Glu-122–His-253. Residue Glu-158 participates in DNA binding. Gly-231 and Asp-233 together coordinate DNA. Position 233 (Asp-233) interacts with Mg(2+). The tract at residues Thr-336–Phe-344 is interaction with PCNA. The segment at Lys-358–Lys-382 is disordered. The segment covering Arg-359–Lys-368 has biased composition (basic and acidic residues). Residues Lys-369–Lys-382 show a composition bias toward basic residues.

The protein belongs to the XPG/RAD2 endonuclease family. FEN1 subfamily. Interacts with PCNA. Three molecules of crn-1 bind to one PCNA trimer with each molecule binding to one PCNA monomer. PCNA stimulates the nuclease activity without altering cleavage specificity. Interacts with cps-6. Mg(2+) is required as a cofactor. Phosphorylated. Phosphorylation upon DNA damage induces relocalization to the nuclear plasma.

The protein localises to the nucleus. The protein resides in the nucleolus. Its subcellular location is the nucleoplasm. It is found in the mitochondrion. Functionally, structure-specific nuclease with 5'-flap endonuclease and 5'-3' exonuclease activities involved in DNA replication and repair. During DNA replication, cleaves the 5'-overhanging flap structure that is generated by displacement synthesis when DNA polymerase encounters the 5'-end of a downstream Okazaki fragment. It enters the flap from the 5'-end and then tracks to cleave the flap base, leaving a nick for ligation. Also involved in the long patch base excision repair (LP-BER) pathway, by cleaving within the apurinic/apyrimidinic (AP) site-terminated flap. Acts as a genome stabilization factor that prevents flaps from equilibrating into structures that lead to duplications and deletions. Also possesses 5'-3' exonuclease activity on nicked or gapped double-stranded DNA, and exhibits RNase H activity. Also involved in replication and repair of rDNA and in repairing mitochondrial DNA. Can associate and cooperate with cps-6 to promote stepwise DNA fragmentation, utilizing the endonuclease activity of cps-6 and both of its own 5'-3' exonuclease activity and gap-dependent endonuclease activity. May play a critical role in switching the state of cells from DNA replication/repair to DNA degradation during apoptosis. The polypeptide is Flap endonuclease 1 (Caenorhabditis elegans).